The sequence spans 304 residues: UDP-N-acetylenolpyruvoylglucosamine reductase (304 aa).

One can recognise an FAD-binding PCMH-type domain in the interval 33 to 198 (RVGGPVDILL…ITATFCFESG (166 aa)). Arg177 is an active-site residue. Ser227 acts as the Proton donor in catalysis. Residue Glu297 is part of the active site.

Belongs to the MurB family. FAD serves as cofactor.

The protein localises to the cytoplasm. The catalysed reaction is UDP-N-acetyl-alpha-D-muramate + NADP(+) = UDP-N-acetyl-3-O-(1-carboxyvinyl)-alpha-D-glucosamine + NADPH + H(+). It participates in cell wall biogenesis; peptidoglycan biosynthesis. In terms of biological role, cell wall formation. In Clostridium botulinum (strain Alaska E43 / Type E3), this protein is UDP-N-acetylenolpyruvoylglucosamine reductase.